The chain runs to 206 residues: GDT1-like protein sll0615 (206 aa).

The next 5 helical transmembrane spans lie at 36–56, 58–78, 114–134, 151–171, and 185–205; these read WVLV…VLMG, IFTF…FLIF, IVPR…VAEW, AWGV…IAVM, and VTLI…WTKI.

It belongs to the GDT1 family.

The protein resides in the cell membrane. The sequence is that of GDT1-like protein sll0615 from Synechocystis sp. (strain ATCC 27184 / PCC 6803 / Kazusa).